The chain runs to 449 residues: POU domain, class 3, transcription factor 1 (449 aa).

5 disordered regions span residues 1–22 (MATTAQYLPRGPGGGAGGTGPL), 76–108 (GGGGGDWAGGPHLEHGKAGGGGTGRADDGGGGG), 132–152 (AHHLGPAMSPSPGAGGGHQPQ), 184–251 (GLHH…PSSD), and 393–449 (KRMT…GSVQ). Gly residues-rich tracts occupy residues 11–20 (GPGGGAGGTG) and 93–108 (AGGGGTGRADDGGGGG). Residues 132–143 (AHHLGPAMSPSP) show a composition bias toward low complexity. Over residues 188 to 197 (ALHEDGHEAQ) the composition is skewed to basic and acidic residues. Over residues 218-230 (AGGLHAAAAHLHP) the composition is skewed to low complexity. The POU-specific domain maps to 245–319 (EDAPSSDDLE…LLNKWLEETD (75 aa)). Residues 337 to 396 (KRKKRTSIEVGVKGALESHFLKCPKPSAHEITGLADSLQLEKEVVRVWFCNRRQKEKRMT) constitute a DNA-binding region (homeobox). Over residues 425–434 (PSAPPPPPPA) the composition is skewed to pro residues.

The protein belongs to the POU transcription factor family. Class-3 subfamily.

Its subcellular location is the nucleus. In terms of biological role, transcription factor that binds to the octamer motif (5'-ATTTGCAT-3'). Acts as a transcriptional activator when binding cooperatively with SOX4, SOX11, or SOX12 to gene promoters. Acts as a transcriptional repressor of myelin-specific genes. The chain is POU domain, class 3, transcription factor 1 (Pou3f1) from Mus musculus (Mouse).